The sequence spans 22 residues: NDMA-dependent alcohol dehydrogenase (22 aa).

The protein belongs to the zinc-containing alcohol dehydrogenase family. In terms of assembly, homotetramer. NADH serves as cofactor.

It localises to the cytoplasm. The enzyme catalyses N,N-dimethyl-4-nitrosoaniline + a primary alcohol = 4-(hydroxylamino)-N,N-dimethylaniline + an aldehyde. It carries out the reaction ethanol + A = acetaldehyde + AH2. This is a novel enzyme, catalytically different from common alcohol dehydrogenases. It is effective in oxidizing ethanol, other primary alcohols and benzylalcohol only in the presence of p-nitroso-N,N-dimethylaniline (NDMA) as an electron acceptor. NADH acts as a cofactor here instead of as a coenzyme. In Rhodococcus erythropolis (Arthrobacter picolinophilus), this protein is NDMA-dependent alcohol dehydrogenase.